Here is a 203-residue protein sequence, read N- to C-terminus: SPbeta prophage-derived uncharacterized lipoprotein YonS (203 aa).

Residues 1–21 (MKLFKKLGILLLITSLILLAA) form the signal peptide. A lipid anchor (N-palmitoyl cysteine) is attached at C22. The S-diacylglycerol cysteine moiety is linked to residue C22. Residues 27–46 (ESSSSSEDTNNATDTNTSES) are compositionally biased toward low complexity. The disordered stretch occupies residues 27–57 (ESSSSSEDTNNATDTNTSESQDISVNGPEKV).

The protein resides in the cell membrane. This is SPbeta prophage-derived uncharacterized lipoprotein YonS (yonS) from Bacillus subtilis (strain 168).